Reading from the N-terminus, the 263-residue chain is NADH dehydrogenase [ubiquinone] iron-sulfur protein 3, mitochondrial (263 aa).

Residues 1–35 (MVAAVARLWWRGLLGASALTRGAGRPSVLLLPVRR) constitute a mitochondrion transit peptide.

The protein belongs to the complex I 30 kDa subunit family. In terms of assembly, core subunit of respiratory chain NADH dehydrogenase (Complex I) which is composed of 45 different subunits. Interacts with NDUFAF3. Interacts with RAB5IF. Found in subcomplexes containing subunits NDUFS2, MT-ND1 and NDUFA13.

It localises to the mitochondrion inner membrane. The enzyme catalyses a ubiquinone + NADH + 5 H(+)(in) = a ubiquinol + NAD(+) + 4 H(+)(out). In terms of biological role, core subunit of the mitochondrial membrane respiratory chain NADH dehydrogenase (Complex I) which catalyzes electron transfer from NADH through the respiratory chain, using ubiquinone as an electron acceptor. Essential for the catalytic activity and assembly of complex I. This Pongo pygmaeus (Bornean orangutan) protein is NADH dehydrogenase [ubiquinone] iron-sulfur protein 3, mitochondrial (NDUFS3).